We begin with the raw amino-acid sequence, 157 residues long: SsrA-binding protein (157 aa).

Residues 135–151 show a composition bias toward basic and acidic residues; the sequence is DKRETEKKRDWSREKGR. Residues 135 to 157 are disordered; the sequence is DKRETEKKRDWSREKGRLLRARG.

This sequence belongs to the SmpB family.

Its subcellular location is the cytoplasm. Functionally, required for rescue of stalled ribosomes mediated by trans-translation. Binds to transfer-messenger RNA (tmRNA), required for stable association of tmRNA with ribosomes. tmRNA and SmpB together mimic tRNA shape, replacing the anticodon stem-loop with SmpB. tmRNA is encoded by the ssrA gene; the 2 termini fold to resemble tRNA(Ala) and it encodes a 'tag peptide', a short internal open reading frame. During trans-translation Ala-aminoacylated tmRNA acts like a tRNA, entering the A-site of stalled ribosomes, displacing the stalled mRNA. The ribosome then switches to translate the ORF on the tmRNA; the nascent peptide is terminated with the 'tag peptide' encoded by the tmRNA and targeted for degradation. The ribosome is freed to recommence translation, which seems to be the essential function of trans-translation. This chain is SsrA-binding protein, found in Rhodopseudomonas palustris (strain BisB5).